The following is a 202-amino-acid chain: uncharacterized protein (202 aa).

Positions 179-202 are disordered; sequence FDEQDSTPELPPNYLLDSQKKSQG.

This is an uncharacterized protein from Haemophilus influenzae (strain ATCC 51907 / DSM 11121 / KW20 / Rd).